The sequence spans 338 residues: Ketol-acid reductoisomerase (NADP(+)) (338 aa).

Residues 1 to 181 (MKVFYDKDCD…GGGKAGIIET (181 aa)) enclose the KARI N-terminal Rossmann domain. Residues 24-27 (YGSQ), arginine 47, and serine 52 each bind NADP(+). Residue histidine 107 is part of the active site. Position 133 (glycine 133) interacts with NADP(+). The region spanning 182–327 (TFREETETDL…EKLRAMMPWI (146 aa)) is the KARI C-terminal knotted domain. Positions 190, 194, 226, and 230 each coordinate Mg(2+). Serine 251 serves as a coordination point for substrate.

Belongs to the ketol-acid reductoisomerase family. It depends on Mg(2+) as a cofactor.

It carries out the reaction (2R)-2,3-dihydroxy-3-methylbutanoate + NADP(+) = (2S)-2-acetolactate + NADPH + H(+). The enzyme catalyses (2R,3R)-2,3-dihydroxy-3-methylpentanoate + NADP(+) = (S)-2-ethyl-2-hydroxy-3-oxobutanoate + NADPH + H(+). The protein operates within amino-acid biosynthesis; L-isoleucine biosynthesis; L-isoleucine from 2-oxobutanoate: step 2/4. Its pathway is amino-acid biosynthesis; L-valine biosynthesis; L-valine from pyruvate: step 2/4. Involved in the biosynthesis of branched-chain amino acids (BCAA). Catalyzes an alkyl-migration followed by a ketol-acid reduction of (S)-2-acetolactate (S2AL) to yield (R)-2,3-dihydroxy-isovalerate. In the isomerase reaction, S2AL is rearranged via a Mg-dependent methyl migration to produce 3-hydroxy-3-methyl-2-ketobutyrate (HMKB). In the reductase reaction, this 2-ketoacid undergoes a metal-dependent reduction by NADPH to yield (R)-2,3-dihydroxy-isovalerate. This is Ketol-acid reductoisomerase (NADP(+)) from Albidiferax ferrireducens (strain ATCC BAA-621 / DSM 15236 / T118) (Rhodoferax ferrireducens).